A 237-amino-acid chain; its full sequence is LexA repressor (237 aa).

The segment at residues 26–46 (FDEMKDALGLKSKSGIHRLIT) is a DNA-binding region (H-T-H motif). Catalysis depends on for autocatalytic cleavage activity residues serine 158 and lysine 196.

The protein belongs to the peptidase S24 family. In terms of assembly, homodimer.

The catalysed reaction is Hydrolysis of Ala-|-Gly bond in repressor LexA.. Its function is as follows. Represses a number of genes involved in the response to DNA damage (SOS response), including recA and lexA. In the presence of single-stranded DNA, RecA interacts with LexA causing an autocatalytic cleavage which disrupts the DNA-binding part of LexA, leading to derepression of the SOS regulon and eventually DNA repair. This Rhodospirillum centenum (strain ATCC 51521 / SW) protein is LexA repressor.